The sequence spans 417 residues: MDKLVIEGGVPLTGTINVSGSKNAALPILMASILAEEPVTYTNVPRLRDIHTTNKLLSILGCPAEFEGDTVSVRPCDLKPEAPYDLVKTMRASVLCLGPLLARLGEARVALPGGCAIGARPVDLHLTALEKMGARFELEEGYIIGRCRKLKGAHIYFDFPTVGGTENLLMAATLAEGETILENAAREPEVVDLARFLIACGAKIEGHGTSVIRVQGVPRLHGCEYAIMPDRIEAGTFLVAAGITGGELLLTGCPWEELDAVIVKLNAMGMHIEKTSEGVLAKRRNGGLRGTDVTTQPFPGFPTDMQAQVMSLMCLAEGTSVVQENIFENRFMHVLELVRMGADIRISGRSAVVRGVKRLTGAPVMASDLRASASLVLAGLAARGTTHVQRIYHLDRGYERIELKLNAVGARIRREAE.

Residue 22 to 23 participates in phosphoenolpyruvate binding; it reads KN. Residue Arg-91 participates in UDP-N-acetyl-alpha-D-glucosamine binding. Cys-115 (proton donor) is an active-site residue. 2-(S-cysteinyl)pyruvic acid O-phosphothioketal is present on Cys-115. Residues 120–124, Asp-304, and Ile-326 contribute to the UDP-N-acetyl-alpha-D-glucosamine site; that span reads RPVDL.

This sequence belongs to the EPSP synthase family. MurA subfamily.

Its subcellular location is the cytoplasm. The catalysed reaction is phosphoenolpyruvate + UDP-N-acetyl-alpha-D-glucosamine = UDP-N-acetyl-3-O-(1-carboxyvinyl)-alpha-D-glucosamine + phosphate. Its pathway is cell wall biogenesis; peptidoglycan biosynthesis. Functionally, cell wall formation. Adds enolpyruvyl to UDP-N-acetylglucosamine. The sequence is that of UDP-N-acetylglucosamine 1-carboxyvinyltransferase from Nitratidesulfovibrio vulgaris (strain ATCC 29579 / DSM 644 / CCUG 34227 / NCIMB 8303 / VKM B-1760 / Hildenborough) (Desulfovibrio vulgaris).